The following is a 145-amino-acid chain: 3-dehydroquinate dehydratase (145 aa).

Y22 serves as the catalytic Proton acceptor. Substrate contacts are provided by N71, H77, and D84. The active-site Proton donor is the H97. Substrate is bound by residues 98–99 (LS) and R108.

It belongs to the type-II 3-dehydroquinase family. As to quaternary structure, homododecamer.

It catalyses the reaction 3-dehydroquinate = 3-dehydroshikimate + H2O. It functions in the pathway metabolic intermediate biosynthesis; chorismate biosynthesis; chorismate from D-erythrose 4-phosphate and phosphoenolpyruvate: step 3/7. In terms of biological role, catalyzes a trans-dehydration via an enolate intermediate. In Francisella tularensis subsp. tularensis (strain WY96-3418), this protein is 3-dehydroquinate dehydratase.